Consider the following 296-residue polypeptide: MSQKKIDLVIVTGMSGAGKTVAIQSFEDLGYFTIDNMPPTLVPKFLEIIEQNNDNKRVALVVDMRSRTFFKEITLILDQIEQNFAIDFRILFLDATDNELVSRYKETRRSHPLAADGRVMDGIKLERELLAPLKSMSQNVVDTSDLTPRQLRQVITEQFSSDSNSASFRVEVMSFGFKYGIPLDADLVFDVRFLPNPYYLPELREKTGLDQEVYDYVMKHQESNDFYKHLVELILPILPGYQKEGKSLLTIAIGCTGGQHRSVAFAHRLAETVKKDWPVNESHRDKDKRKETVNRS.

13–20 lines the ATP pocket; the sequence is GMSGAGKT. 63–66 is a GTP binding site; it reads DMRS.

Belongs to the RapZ-like family.

Its function is as follows. Displays ATPase and GTPase activities. This chain is Nucleotide-binding protein SUB0630, found in Streptococcus uberis (strain ATCC BAA-854 / 0140J).